The following is a 313-amino-acid chain: Ribosomal RNA small subunit methyltransferase H (313 aa).

S-adenosyl-L-methionine is bound by residues 35 to 37 (GGH), aspartate 55, phenylalanine 79, aspartate 100, and glutamine 107.

The protein belongs to the methyltransferase superfamily. RsmH family.

It localises to the cytoplasm. The enzyme catalyses cytidine(1402) in 16S rRNA + S-adenosyl-L-methionine = N(4)-methylcytidine(1402) in 16S rRNA + S-adenosyl-L-homocysteine + H(+). In terms of biological role, specifically methylates the N4 position of cytidine in position 1402 (C1402) of 16S rRNA. In Burkholderia ambifaria (strain ATCC BAA-244 / DSM 16087 / CCUG 44356 / LMG 19182 / AMMD) (Burkholderia cepacia (strain AMMD)), this protein is Ribosomal RNA small subunit methyltransferase H.